The sequence spans 227 residues: MDSVMRKSLFLLLPLVVTNAHAVYVDVRHEYLDDSKANYDRAYISHRFANGVGFAIEAISKSGGDDTNKAFNDLETQGNEYTISYQFKTGDVAWQPGFVLETGNGYSTYKPYFRATWTLNESWWVGARYRFEYVRRSSDIRDDDTINRMDVWAGYKWNNFDWTIEGIYKKADKYDLYDGGKDNYEYNFRTAYIIDQWSPFVEVGNVSVNSNSDERQTRFRVGIGYTF.

The signal sequence occupies residues 1-22 (MDSVMRKSLFLLLPLVVTNAHA).

This is an uncharacterized protein from Salmonella typhi.